The following is a 416-amino-acid chain: MYRPVIASRKSIPPWLIILCVLGVLAALGIIIGLLVHFLAVENKIYYYQGGFKVLDIPYDRNYERETSLESNYLSKILENKMVEAFQNSNIYKQYINSQVITLVPDNNSVTAHIWLVFKDPWSNKENLRRRIESILRQMLENNPESLTTDPGSLKLTEISKVDAEKIINNRCGRRPRMSATYDRITGGSTAHKGEWPWQASLRVNGKHYCGASLIGERFLLTAAHCFQGTNNPKNLTVSFGTRVTPAYMQHSVQEIIIHEDYVKGEHHDDVAVIKLTEKVSFNNDVHRVCLPESTQIFPPGEGVVVTGWGSFSYNGKSPLLLQKASIKIIDTNTCNSEEAYGGRIVDTMLCAGYLEGSIDACQGDSGGPLVHPNSRDIWYLVGIVSWGHECGRVNKPGVYMRVTSYRNWIASKTGI.

Topologically, residues 1–15 (MYRPVIASRKSIPPW) are cytoplasmic. Residues 16 to 36 (LIILCVLGVLAALGIIIGLLV) traverse the membrane as a helical; Signal-anchor for type II membrane protein segment. Over 37–416 (HFLAVENKIY…RNWIASKTGI (380 aa)) the chain is Extracellular. The region spanning 44 to 161 (KIYYYQGGFK…GSLKLTEISK (118 aa)) is the SEA domain. An N-linked (GlcNAc...) asparagine glycan is attached at Asn107. One can recognise a Peptidase S1 domain in the interval 185-415 (ITGGSTAHKG…YRNWIASKTG (231 aa)). An intrachain disulfide couples Cys210 to Cys226. Catalysis depends on His225, which acts as the Charge relay system. N-linked (GlcNAc...) asparagine glycosylation is present at Asn235. Asp270 serves as the catalytic Charge relay system. Intrachain disulfides connect Cys335–Cys351 and Cys362–Cys391. Ser366 acts as the Charge relay system in catalysis.

This sequence belongs to the peptidase S1 family. As to expression, expressed in esophagus, cervix, tongue, and testes.

The protein resides in the cell membrane. With respect to regulation, inhibited by aprotinin, leupeptin, benzamidine, SERPINA1, SPINT1 and SPINT2. In terms of biological role, serine protease. The chain is Transmembrane protease serine 11B-like protein (Tmprss11b) from Mus musculus (Mouse).